A 152-amino-acid polypeptide reads, in one-letter code: UPF0719 transmembrane protein MT2674.1 (152 aa).

4 helical membrane-spanning segments follow: residues 21-41 (VATV…FLMV), 62-82 (VVLA…AIYA), 92-112 (IGVA…LVIL), and 131-151 (PAVF…AAAL).

It belongs to the UPF0719 family.

Its subcellular location is the cell membrane. This chain is UPF0719 transmembrane protein MT2674.1, found in Mycobacterium tuberculosis (strain CDC 1551 / Oshkosh).